Consider the following 119-residue polypeptide: Large ribosomal subunit protein uL14 (119 aa).

This sequence belongs to the universal ribosomal protein uL14 family. In terms of assembly, part of the 50S ribosomal subunit. Forms a cluster with proteins L3 and L19. In the 70S ribosome, L14 and L19 interact and together make contacts with the 16S rRNA in bridges B5 and B8.

In terms of biological role, binds to 23S rRNA. Forms part of two intersubunit bridges in the 70S ribosome. The protein is Large ribosomal subunit protein uL14 of Anaplasma phagocytophilum (strain HZ).